The chain runs to 713 residues: Cadherin-13 (713 aa).

The first 22 residues, 1–22, serve as a signal peptide directing secretion; the sequence is MQPRTPLVLCVLLSQVLLLTSA. The propeptide occupies 23–138; it reads EDLDCIPGFQ…RTSPVPRQKR (116 aa). Residues Asn-52 and Asn-86 are each glycosylated (N-linked (GlcNAc...) asparagine). Cadherin domains are found at residues 139–245, 246–363, 364–477, 478–585, and 584–690; these read SIVV…RPIF, REGP…SPKF, TKKE…GPVF, YPDP…APFI, and FIYP…VDSN. Asn-382, Asn-489, Asn-500, Asn-530, Asn-598, Asn-638, and Asn-671 each carry an N-linked (GlcNAc...) asparagine glycan. The GPI-anchor amidated asparagine moiety is linked to residue Asn-690. Positions 691–713 are cleaved as a propeptide — removed in mature form; that stretch reads AVGALRFSLPSLLLLSLFSLACL.

By contrast to classical cadherins, homodimerization in trans is not mediated by cadherin EC1 domain strand-swapping, but instead through a homophilic adhesive interface which joins two elongated EC1-EC2 domains through a region near their Ca2+-binding sites to form a tetrahedral, X-like shape.

The protein resides in the cell membrane. Its subcellular location is the cytoplasm. Its function is as follows. Cadherins are calcium-dependent cell adhesion proteins. They preferentially interact with themselves in a homophilic manner in connecting cells; cadherins may thus contribute to the sorting of heterogeneous cell types. May act as a negative regulator of neural cell growth. This chain is Cadherin-13 (CDH13), found in Pongo abelii (Sumatran orangutan).